Here is a 240-residue protein sequence, read N- to C-terminus: Phosducin-like protein 2 (240 aa).

Positions 38–201 (QQEAMVKPYE…LEWKLSEVGA (164 aa)) constitute a Phosducin domain. Positions 89–240 (FGELREISGN…DSSGSDTEAK (152 aa)) are thioredoxin fold.

Belongs to the phosducin family. In terms of assembly, interacts with the CCT chaperonin complex and actin. As to expression, testis-specific (at protein level).

It localises to the endoplasmic reticulum. In terms of biological role, essential for male fertility, spermiogenesis and acrosome formation. The polypeptide is Phosducin-like protein 2 (Pdcl2) (Mus musculus (Mouse)).